A 200-amino-acid polypeptide reads, in one-letter code: High mobility group protein B3 (200 aa).

Lys3 carries the N6-acetyllysine modification. DNA-binding regions (HMG box) lie at residues Pro9–Gly79 and Pro93–Lys161. A Cysteine sulfonic acid (-SO3H); alternate modification is found at Cys23. A disulfide bridge links Cys23 with Cys45. 2 positions are modified to N6-acetyllysine: Lys30 and Lys43. Cys45 bears the Cysteine sulfonic acid (-SO3H); alternate mark. The interval Tyr71–Pro97 is disordered. Ser98 bears the Phosphoserine mark. Cys104 carries the post-translational modification Cysteine sulfonic acid (-SO3H). N6-acetyllysine occurs at positions 112 and 139. The interval Lys163 to Glu200 is disordered. A compositionally biased stretch (acidic residues) spans Glu182–Glu200.

The protein belongs to the HMGB family. In terms of processing, reduction/oxidation of cysteine residues Cys-23, Cys-45 and Cys-104 and a possible intramolecular disulfide bond involving Cys-23 and Cys-45 give rise to different redox forms with specific functional activities in various cellular compartments: 1- fully reduced HMGB3 (HMGB3C23hC45hC104h), 2- disulfide HMGB3 (HMGB3C23-C45C104h) and 3- sulfonyl HMGB3 (HMGB3C23soC45soC104so).

It localises to the nucleus. The protein localises to the chromosome. The protein resides in the cytoplasm. Functionally, multifunctional protein with various roles in different cellular compartments. May act in a redox sensitive manner. Associates with chromatin and binds DNA with a preference for non-canonical DNA structures such as single-stranded DNA. Can bend DNA and enhance DNA flexibility by looping thus providing a mechanism to promote activities on various gene promoters. Proposed to be involved in the innate immune response to nucleic acids by acting as a cytoplasmic promiscuous immunogenic DNA/RNA sensor. Negatively regulates B-cell and myeloid cell differentiation. In hematopoietic stem cells may regulate the balance between self-renewal and differentiation. Involved in negative regulation of canonical Wnt signaling. This chain is High mobility group protein B3 (HMGB3), found in Bos taurus (Bovine).